A 364-amino-acid chain; its full sequence is MPSATPILPRQQTAIVAEAAGKLRIQHNVTVPSPGPMVAIVKTAAVAINPVDAKMLDYSPVPGAVHGYDFAGTIVSMGPNTPAHLRIGDRVAGWVHGMNAVEPNVGAFAEYVASPADLILRIPDEMSFNDAASIGLGLFTAGLGLFHELKVPGSLSDPDGLEIAEDERFVLVAGGSTATGTRAIQLLRLAGLRPIATCSKANMDLVHRFGAEHAFDYSDPECAAEIRRYTGGTLAYALDCVAMADTTQLCYNAMGRAGGRYVTLEPFRSAIAETRPLTIEPSWLLALTVFGRKVDIDGEYSRDARPDDHKFAVELTVSVQALLDQGKFDTHPIKVMNGGWDGVKEGVDTIRTQAMSGQKLVYPV.

51–54 lines the NADP(+) pocket; that stretch reads VDAK. 136-143 is a binding site for substrate; that stretch reads LGLFTAGL. NADP(+)-binding positions include 176–179, 199–202, tyrosine 217, and 264–265; these read STAT, SKAN, and LE. 286–290 provides a ligand contact to substrate; sequence ALTVF. Position 355 to 356 (355 to 356) interacts with NADP(+); the sequence is MS.

This sequence belongs to the zinc-containing alcohol dehydrogenase family. In terms of assembly, monomer.

Its pathway is secondary metabolite biosynthesis. Its function is as follows. Trans-enoyl reductase; part of the tra gene cluster that produces terrestric acid. The clavatol biosynthesis cluster cla and the terrestric acid cluster tra are both involved in the production of peniphenones and penilactones. The non-reducing PKS claF is responsible for the formation of clavatol from successive condensations of 3 malonyl-CoA units, presumably with a simple acetyl-CoA starter unit, and 2 methylation steps. The esterase claE probably collaborates with claF by catalyzing the hydrolysis of ACP-bound acyl intermediates to free the ACP from stalled intermediates. The clavatol oxidase claD then converts clavatol to hydroxyclavatol. Spontaneous dehydration of hydroxyclavatol leads to the accumulation of the highly active ortho-quinone methide. On the other hand, the PKS-NRPS hybrid traA is involved in the formation of crustosic acid, with the help of traB and traD. The polyketide synthase module (PKS) of traA is responsible for the synthesis of the polyketide backbone via the condensation of an acetyl-CoA starter unit with 3 malonyl-CoA units. The downstream nonribosomal peptide synthetase (NRPS) module then amidates the carboxyl end of the polyketide with L-malic acid. Because traA lacks a designated enoylreductase (ER) domain, the required activity is provided the enoyl reductase traG. Crustosic acid undergoes decarboxylation and isomerization to the terrestric acid, catalyzed by the 2-oxoglutarate-dependent dioxygenase traH. Both acids are further converted to the 2 gamma-butyrolactones (R)-5-methyltetronic acid and (S)-5-carboxylmethyltetronic acid, with involvement of the cytochrome P450 monooxygenase claJ. Spontaneous addition of the methide to these gamma-butyrolactones leads to peniphenone D and penilactone D, which undergo again stereospecific attacking by methide to give penilactones A and B. The protein is Trans-enoyl reductase traG of Penicillium crustosum (Blue mold fungus).